The following is a 208-amino-acid chain: Cysteine-rich protein 2 (208 aa).

Positions 5–57 constitute an LIM zinc-binding 1 domain; it reads CPKCDKTVYFAEKVSSLGKDWHKFCLKCERCNKTLTPGGHAEHDGKPFCHKPC. Lysine 23 carries the N6-acetyllysine modification. Serine 104 carries the post-translational modification Phosphoserine. One can recognise an LIM zinc-binding 2 domain in the interval 126-178; it reads CPRCNKRVYFAEKVTSLGKDWHRPCLRCERCSKTLTPGGHAEHDGQPYCHKPC. An N6-acetyllysine mark is found at lysine 138 and lysine 144.

Interacts with TGFB1I1. In terms of tissue distribution, expressed more abundantly in liver and kidney of females than that of males. Equally expressed in brain, lung and heart.

The protein is Cysteine-rich protein 2 (Crip2) of Rattus norvegicus (Rat).